We begin with the raw amino-acid sequence, 207 residues long: FMN-dependent NADH:quinone oxidoreductase 2 (207 aa).

FMN is bound by residues S9, 15–17 (SAS), and 97–100 (MWNF).

This sequence belongs to the azoreductase type 1 family. Homodimer. The cofactor is FMN.

It catalyses the reaction 2 a quinone + NADH + H(+) = 2 a 1,4-benzosemiquinone + NAD(+). The enzyme catalyses N,N-dimethyl-1,4-phenylenediamine + anthranilate + 2 NAD(+) = 2-(4-dimethylaminophenyl)diazenylbenzoate + 2 NADH + 2 H(+). Quinone reductase that provides resistance to thiol-specific stress caused by electrophilic quinones. Its function is as follows. Also exhibits azoreductase activity. Catalyzes the reductive cleavage of the azo bond in aromatic azo compounds to the corresponding amines. The polypeptide is FMN-dependent NADH:quinone oxidoreductase 2 (Burkholderia lata (strain ATCC 17760 / DSM 23089 / LMG 22485 / NCIMB 9086 / R18194 / 383)).